Reading from the N-terminus, the 243-residue chain is Large ribosomal subunit protein uL2 (243 aa).

A disordered region spans residues 198-243; that stretch reads VDHPFGGGGRQHPGKPKSVSRDTPPGRKVGDIASKRTGRGGKGGQE. Positions 221-231 are enriched in basic and acidic residues; that stretch reads PPGRKVGDIAS.

The protein belongs to the universal ribosomal protein uL2 family. As to quaternary structure, part of the 50S ribosomal subunit. Forms a bridge to the 30S subunit in the 70S ribosome.

Functionally, one of the primary rRNA binding proteins. Required for association of the 30S and 50S subunits to form the 70S ribosome, for tRNA binding and peptide bond formation. It has been suggested to have peptidyltransferase activity; this is somewhat controversial. Makes several contacts with the 16S rRNA in the 70S ribosome. This Natronomonas pharaonis (strain ATCC 35678 / DSM 2160 / CIP 103997 / JCM 8858 / NBRC 14720 / NCIMB 2260 / Gabara) (Halobacterium pharaonis) protein is Large ribosomal subunit protein uL2.